The sequence spans 986 residues: Bone morphogenetic protein 1 (986 aa).

The N-terminal stretch at 1 to 22 (MPGVARLPLLLGLLLLPRPGRP) is a signal peptide. Residues 23 to 120 (LDLADYTYDL…RWRGRSRSRR (98 aa)) constitute a propeptide that is removed on maturation. The interval 83–125 (SIKAAVPGNTSTPSCQSTNGQPQRGACGRWRGRSRSRRAATSR) is disordered. Positions 90-104 (GNTSTPSCQSTNGQP) are enriched in polar residues. N-linked (GlcNAc...) asparagine glycosylation occurs at asparagine 91. The span at 112 to 122 (WRGRSRSRRAA) shows a compositional bias: basic residues. The Peptidase M12A domain occupies 121 to 320 (AATSRPERVW…AQARKLYKCP (200 aa)). A glycan (N-linked (GlcNAc...) asparagine) is linked at asparagine 142. 4 disulfide bridges follow: cysteine 163/cysteine 319, cysteine 183/cysteine 205, cysteine 185/cysteine 186, and cysteine 322/cysteine 348. Histidine 213 contributes to the Zn(2+) binding site. Glutamate 214 is an active-site residue. Residues histidine 217 and histidine 223 each coordinate Zn(2+). 2 CUB domains span residues 322–434 (CGET…YEAI) and 435–546 (CGGD…NFFK). Residues asparagine 332 and asparagine 363 are each glycosylated (N-linked (GlcNAc...) asparagine). 15 disulfide bridges follow: cysteine 375–cysteine 397, cysteine 435–cysteine 461, cysteine 488–cysteine 510, cysteine 551–cysteine 563, cysteine 559–cysteine 572, cysteine 574–cysteine 587, cysteine 591–cysteine 617, cysteine 644–cysteine 666, cysteine 707–cysteine 718, cysteine 714–cysteine 727, cysteine 729–cysteine 742, cysteine 747–cysteine 773, cysteine 800–cysteine 822, cysteine 860–cysteine 890, and cysteine 917–cysteine 939. One can recognise an EGF-like 1; calcium-binding domain in the interval 547–588 (EVDECSRPNRGGCEQRCLNTLGSYKCSCDPGYELAPDKRRCE). The CUB 3 domain occupies 591 to 703 (CGGFLTKLNG…KGFKAHFFSD (113 aa)). N-linked (GlcNAc...) asparagine glycosylation is present at asparagine 599. The EGF-like 2; calcium-binding domain occupies 704–743 (KDECSKDNGGCQQDCVNTFGSYECQCRSGFVLHDNKHDCK). 2 consecutive CUB domains span residues 747-859 (CDHK…HATE) and 860-976 (CGGQ…YTST). An omega-N-methylarginine mark is found at arginine 934 and arginine 937.

In terms of assembly, interacts with POSTN, the interaction promotes deposition on the extracellular matrix. Zn(2+) serves as cofactor. In terms of processing, proteolytically activated in the trans-Golgi network by furin-like/paired basic proprotein convertases, cleavage is not required for secretion. Ubiquitous.

The protein resides in the golgi apparatus. It localises to the trans-Golgi network. It is found in the secreted. The protein localises to the extracellular space. Its subcellular location is the extracellular matrix. The catalysed reaction is Cleavage of the C-terminal propeptide at Ala-|-Asp in type I and II procollagens and at Arg-|-Asp in type III.. Activity is increased by the procollagen C-endopeptidase enhancer protein. Functionally, metalloprotease that plays key roles in regulating the formation of the extracellular matrix (ECM) via processing of various precursor proteins into mature functional enzymes or structural proteins. Thereby participates in several developmental and physiological processes such as cartilage and bone formation, muscle growth and homeostasis, wound healing and tissue repair. Roles in ECM formation include cleavage of the C-terminal propeptides from procollagens such as procollagen I, II and III or the proteolytic activation of the enzyme lysyl oxidase LOX, necessary to formation of covalent cross-links in collagen and elastic fibers. Additional substrates include matricellular thrombospondin-1/THBS1 whose cleavage leads to cell adhesion disruption and TGF-beta activation. In terms of biological role, plays an important role in bone repair by acting as a coactivator of BMP7. This chain is Bone morphogenetic protein 1 (BMP1), found in Homo sapiens (Human).